The sequence spans 570 residues: Hydroxylamine reductase (570 aa).

[4Fe-4S] cluster contacts are provided by cysteine 5, cysteine 8, cysteine 17, and cysteine 23. Hybrid [4Fe-2O-2S] cluster is bound by residues histidine 266, glutamate 290, cysteine 334, cysteine 425, cysteine 453, cysteine 478, glutamate 513, and lysine 515. At cysteine 425 the chain carries Cysteine persulfide.

It belongs to the HCP family. The cofactor is [4Fe-4S] cluster. Hybrid [4Fe-2O-2S] cluster is required as a cofactor.

It is found in the cytoplasm. It carries out the reaction A + NH4(+) + H2O = hydroxylamine + AH2 + H(+). Its function is as follows. Catalyzes the reduction of hydroxylamine to form NH(3) and H(2)O. The chain is Hydroxylamine reductase from Clostridium botulinum (strain Kyoto / Type A2).